The chain runs to 395 residues: Ribosomal RNA large subunit methyltransferase G (395 aa).

This sequence belongs to the methyltransferase superfamily. RlmG family.

The protein resides in the cytoplasm. It carries out the reaction guanosine(1835) in 23S rRNA + S-adenosyl-L-methionine = N(2)-methylguanosine(1835) in 23S rRNA + S-adenosyl-L-homocysteine + H(+). In terms of biological role, specifically methylates the guanine in position 1835 (m2G1835) of 23S rRNA. This chain is Ribosomal RNA large subunit methyltransferase G, found in Yersinia pestis (strain Pestoides F).